A 376-amino-acid polypeptide reads, in one-letter code: Chaperone protein DnaJ (376 aa).

Positions 5-70 (DYYEILGVSK…QKRAAYDQYG (66 aa)) constitute a J domain. A CR-type zinc finger spans residues 131–209 (GVTKEIRIPT…CHGHGRVERS (79 aa)). Cysteine 144, cysteine 147, cysteine 161, cysteine 164, cysteine 183, cysteine 186, cysteine 197, and cysteine 200 together coordinate Zn(2+). CXXCXGXG motif repeat units lie at residues 144–151 (CDVCHGSG), 161–168 (CPTCHGSG), 183–190 (CPHCQGRG), and 197–204 (CNKCHGHG).

This sequence belongs to the DnaJ family. As to quaternary structure, homodimer. It depends on Zn(2+) as a cofactor.

It localises to the cytoplasm. Its function is as follows. Participates actively in the response to hyperosmotic and heat shock by preventing the aggregation of stress-denatured proteins and by disaggregating proteins, also in an autonomous, DnaK-independent fashion. Unfolded proteins bind initially to DnaJ; upon interaction with the DnaJ-bound protein, DnaK hydrolyzes its bound ATP, resulting in the formation of a stable complex. GrpE releases ADP from DnaK; ATP binding to DnaK triggers the release of the substrate protein, thus completing the reaction cycle. Several rounds of ATP-dependent interactions between DnaJ, DnaK and GrpE are required for fully efficient folding. Also involved, together with DnaK and GrpE, in the DNA replication of plasmids through activation of initiation proteins. This is Chaperone protein DnaJ from Escherichia coli (strain K12 / DH10B).